Consider the following 148-residue polypeptide: Cytochrome c-type biogenesis protein CcmE (148 aa).

Residues 1–7 (MKPRHKK) are Cytoplasmic-facing. Residues 8-28 (LAIIASSVTALGVASVLVLNA) form a helical; Signal-anchor for type II membrane protein membrane-spanning segment. Residues 29–148 (FQSNLVFFFS…ADKARKTVMQ (120 aa)) lie on the Periplasmic side of the membrane. Heme is bound by residues histidine 123 and tyrosine 127.

Belongs to the CcmE/CycJ family.

Its subcellular location is the cell inner membrane. In terms of biological role, heme chaperone required for the biogenesis of c-type cytochromes. Transiently binds heme delivered by CcmC and transfers the heme to apo-cytochromes in a process facilitated by CcmF and CcmH. The protein is Cytochrome c-type biogenesis protein CcmE of Nitrosospira multiformis (strain ATCC 25196 / NCIMB 11849 / C 71).